The primary structure comprises 284 residues: Putative ABC transporter ATP-binding protein SCO5958 (284 aa).

An ABC transporter domain is found at valine 15–leucine 250. Glycine 48–threonine 55 is an ATP binding site.

The protein belongs to the ABC transporter superfamily.

Its subcellular location is the cell membrane. Functionally, probably part of an ABC transporter complex. Responsible for energy coupling to the transport system. This chain is Putative ABC transporter ATP-binding protein SCO5958, found in Streptomyces coelicolor (strain ATCC BAA-471 / A3(2) / M145).